We begin with the raw amino-acid sequence, 482 residues long: Glutamyl-tRNA(Gln) amidotransferase subunit A (482 aa).

Residues Lys75 and Ser150 each act as charge relay system in the active site. Ser174 serves as the catalytic Acyl-ester intermediate.

Belongs to the amidase family. GatA subfamily. As to quaternary structure, heterotrimer of A, B and C subunits.

The enzyme catalyses L-glutamyl-tRNA(Gln) + L-glutamine + ATP + H2O = L-glutaminyl-tRNA(Gln) + L-glutamate + ADP + phosphate + H(+). Functionally, allows the formation of correctly charged Gln-tRNA(Gln) through the transamidation of misacylated Glu-tRNA(Gln) in organisms which lack glutaminyl-tRNA synthetase. The reaction takes place in the presence of glutamine and ATP through an activated gamma-phospho-Glu-tRNA(Gln). The protein is Glutamyl-tRNA(Gln) amidotransferase subunit A of Thermosynechococcus vestitus (strain NIES-2133 / IAM M-273 / BP-1).